Consider the following 94-residue polypeptide: Co-chaperonin GroES (94 aa).

The protein belongs to the GroES chaperonin family. In terms of assembly, heptamer of 7 subunits arranged in a ring. Interacts with the chaperonin GroEL.

It is found in the cytoplasm. Together with the chaperonin GroEL, plays an essential role in assisting protein folding. The GroEL-GroES system forms a nano-cage that allows encapsulation of the non-native substrate proteins and provides a physical environment optimized to promote and accelerate protein folding. GroES binds to the apical surface of the GroEL ring, thereby capping the opening of the GroEL channel. The polypeptide is Co-chaperonin GroES (Clostridium novyi (strain NT)).